Reading from the N-terminus, the 273-residue chain is Ethanolamine ammonia-lyase small subunit (273 aa).

Residues Val-164, Glu-185, and Cys-214 each contribute to the adenosylcob(III)alamin site.

The protein belongs to the EutC family. As to quaternary structure, the basic unit is a heterodimer which dimerizes to form tetramers. The heterotetramers trimerize; 6 large subunits form a core ring with 6 small subunits projecting outwards. Adenosylcob(III)alamin serves as cofactor.

It localises to the bacterial microcompartment. The enzyme catalyses ethanolamine = acetaldehyde + NH4(+). It functions in the pathway amine and polyamine degradation; ethanolamine degradation. Catalyzes the deamination of various vicinal amino-alcohols to oxo compounds. Allows this organism to utilize ethanolamine as the sole source of nitrogen and carbon in the presence of external vitamin B12. The chain is Ethanolamine ammonia-lyase small subunit from Pseudomonas paraeruginosa (strain DSM 24068 / PA7) (Pseudomonas aeruginosa (strain PA7)).